Here is a 352-residue protein sequence, read N- to C-terminus: MSLTVDDFDFPLPPELIAQHPAAERRGSRLLHVCGEQLVDRRFADLPTLLKAGDLLVFNDTRVIKARFFGQKDTGGQVEIMLERIVDATHAICQVRASKAPKAGSTMRLADAFTVKMTGRAGADGDFFALELAEPGDFWELSERYGKLPLPPYIEHPAEGTDETRYQTVYAREPGAVAAPTAGLHFDEDMLATLQAQGINTAFLTLHVGAGTYRPMRVEKIADHRMHSERFEIPPATADAITTTRAAGGQVIAVGTTSLRALESAGNEDGTVQVGGAETSIFITPGYRFQVVDRLITNFHLPKSTLLMLVSAFAGYDHIRAAYAHAVAERYRFFSYGDAMLLERTGQPSDAI.

The protein belongs to the QueA family. Monomer.

The protein localises to the cytoplasm. The catalysed reaction is 7-aminomethyl-7-carbaguanosine(34) in tRNA + S-adenosyl-L-methionine = epoxyqueuosine(34) in tRNA + adenine + L-methionine + 2 H(+). The protein operates within tRNA modification; tRNA-queuosine biosynthesis. Functionally, transfers and isomerizes the ribose moiety from AdoMet to the 7-aminomethyl group of 7-deazaguanine (preQ1-tRNA) to give epoxyqueuosine (oQ-tRNA). The protein is S-adenosylmethionine:tRNA ribosyltransferase-isomerase of Dechloromonas aromatica (strain RCB).